We begin with the raw amino-acid sequence, 68 residues long: Large ribosomal subunit protein uL29 (68 aa).

Belongs to the universal ribosomal protein uL29 family.

The protein is Large ribosomal subunit protein uL29 of Chlorobaculum parvum (strain DSM 263 / NCIMB 8327) (Chlorobium vibrioforme subsp. thiosulfatophilum).